Consider the following 394-residue polypeptide: Elongation factor Tu 2 (394 aa).

The 195-residue stretch at 10–204 (KPHVNVGTIG…ALDTYIPEPA (195 aa)) folds into the tr-type G domain. The tract at residues 19–26 (GHVDHGKT) is G1. A GTP-binding site is contributed by 19–26 (GHVDHGKT). Threonine 26 contributes to the Mg(2+) binding site. Residues 60–64 (GITIN) are G2. The segment at 81-84 (DCPG) is G3. GTP-binding positions include 81–85 (DCPGH) and 136–139 (NKCD). Residues 136 to 139 (NKCD) form a G4 region. The G5 stretch occupies residues 174-176 (SAL).

Belongs to the TRAFAC class translation factor GTPase superfamily. Classic translation factor GTPase family. EF-Tu/EF-1A subfamily. Monomer.

The protein localises to the cytoplasm. The enzyme catalyses GTP + H2O = GDP + phosphate + H(+). GTP hydrolase that promotes the GTP-dependent binding of aminoacyl-tRNA to the A-site of ribosomes during protein biosynthesis. The chain is Elongation factor Tu 2 from Shewanella frigidimarina (strain NCIMB 400).